A 236-amino-acid polypeptide reads, in one-letter code: Ribonuclease 3 (236 aa).

The RNase III domain occupies 13-138; that stretch reads TEKVFKISGY…LIGAIYVDGG (126 aa). E51 contacts Mg(2+). D55 is an active-site residue. Positions 124 and 127 each coordinate Mg(2+). The active site involves E127. The DRBM domain maps to 164-232; it reads DAKTALQEWA…AKLMLEKVTK (69 aa).

This sequence belongs to the ribonuclease III family. Homodimer. Mg(2+) is required as a cofactor.

The protein localises to the cytoplasm. It carries out the reaction Endonucleolytic cleavage to 5'-phosphomonoester.. Its function is as follows. Digests double-stranded RNA. Involved in the processing of primary rRNA transcript to yield the immediate precursors to the large and small rRNAs (23S and 16S). Processes some mRNAs, and tRNAs when they are encoded in the rRNA operon. Processes pre-crRNA and tracrRNA of type II CRISPR loci if present in the organism. This is Ribonuclease 3 from Anaplasma phagocytophilum (strain HZ).